A 241-amino-acid polypeptide reads, in one-letter code: Lactate utilization protein C (241 aa).

Belongs to the LutC/YkgG family.

Is involved in L-lactate degradation and allows cells to grow with lactate as the sole carbon source. The polypeptide is Lactate utilization protein C (Geobacillus sp. (strain WCH70)).